A 316-amino-acid polypeptide reads, in one-letter code: MSVATSDMAEAIPERGRAVLIAGPTASGKSALALALAEACGGVIINTDSMQVYGDLRVLTARPTPADEARVPHRLYGTVDAAVNFSAGAWVEAAAAALADARGRGLLPIFVGGSGLYFKALTRGLSAVPAIAPQVREDVRARLEQGGVEALHAALARRDPTSAARLNPNDRSRVARALEVVEATGRSLTDWHRDALPPLLPPEQVTALFLAPQRDELYARIDARFELMLQAGALDEVAALAARKLDPLLPAMKAHGVPALIRHLKGEISRDEAASIGCADTRHYAKRQFTWFRHQLPEFEWVAPDRAAERLERQTG.

23-30 (GPTASGKS) lines the ATP pocket. 25-30 (TASGKS) is a binding site for substrate. Residues 48 to 51 (DSMQ) are interaction with substrate tRNA.

It belongs to the IPP transferase family. In terms of assembly, monomer. Mg(2+) serves as cofactor.

The catalysed reaction is adenosine(37) in tRNA + dimethylallyl diphosphate = N(6)-dimethylallyladenosine(37) in tRNA + diphosphate. In terms of biological role, catalyzes the transfer of a dimethylallyl group onto the adenine at position 37 in tRNAs that read codons beginning with uridine, leading to the formation of N6-(dimethylallyl)adenosine (i(6)A). The chain is tRNA dimethylallyltransferase from Rhodopseudomonas palustris (strain BisB18).